Here is a 214-residue protein sequence, read N- to C-terminus: Phosphatidylserine decarboxylase proenzyme (214 aa).

The active-site Schiff-base intermediate with substrate; via pyruvic acid is the serine 182. Serine 182 is modified (pyruvic acid (Ser); by autocatalysis).

This sequence belongs to the phosphatidylserine decarboxylase family. PSD-A subfamily. In terms of assembly, heterodimer of a large membrane-associated beta subunit and a small pyruvoyl-containing alpha subunit. It depends on pyruvate as a cofactor. Is synthesized initially as an inactive proenzyme. Formation of the active enzyme involves a self-maturation process in which the active site pyruvoyl group is generated from an internal serine residue via an autocatalytic post-translational modification. Two non-identical subunits are generated from the proenzyme in this reaction, and the pyruvate is formed at the N-terminus of the alpha chain, which is derived from the carboxyl end of the proenzyme. The post-translation cleavage follows an unusual pathway, termed non-hydrolytic serinolysis, in which the side chain hydroxyl group of the serine supplies its oxygen atom to form the C-terminus of the beta chain, while the remainder of the serine residue undergoes an oxidative deamination to produce ammonia and the pyruvoyl prosthetic group on the alpha chain.

The protein localises to the cell membrane. The catalysed reaction is a 1,2-diacyl-sn-glycero-3-phospho-L-serine + H(+) = a 1,2-diacyl-sn-glycero-3-phosphoethanolamine + CO2. The protein operates within phospholipid metabolism; phosphatidylethanolamine biosynthesis; phosphatidylethanolamine from CDP-diacylglycerol: step 2/2. Catalyzes the formation of phosphatidylethanolamine (PtdEtn) from phosphatidylserine (PtdSer). This Burkholderia ambifaria (strain MC40-6) protein is Phosphatidylserine decarboxylase proenzyme.